A 24-amino-acid chain; its full sequence is Small ribosomal subunit protein uS5 (24 aa).

It belongs to the universal ribosomal protein uS5 family. In terms of assembly, part of the 30S ribosomal subunit. Contacts proteins S4 and S8.

In terms of biological role, with S4 and S12 plays an important role in translational accuracy. Located at the back of the 30S subunit body where it stabilizes the conformation of the head with respect to the body. The sequence is that of Small ribosomal subunit protein uS5 (rpsE) from Vibrio proteolyticus (Aeromonas proteolytica).